The sequence spans 367 residues: Phosphoribosylaminoimidazole-succinocarboxamide synthase (367 aa).

It belongs to the SAICAR synthetase family.

It carries out the reaction 5-amino-1-(5-phospho-D-ribosyl)imidazole-4-carboxylate + L-aspartate + ATP = (2S)-2-[5-amino-1-(5-phospho-beta-D-ribosyl)imidazole-4-carboxamido]succinate + ADP + phosphate + 2 H(+). The protein operates within purine metabolism; IMP biosynthesis via de novo pathway; 5-amino-1-(5-phospho-D-ribosyl)imidazole-4-carboxamide from 5-amino-1-(5-phospho-D-ribosyl)imidazole-4-carboxylate: step 1/2. The sequence is that of Phosphoribosylaminoimidazole-succinocarboxamide synthase from Colwellia psychrerythraea (strain 34H / ATCC BAA-681) (Vibrio psychroerythus).